The sequence spans 295 residues: Tyrosine recombinase XerD (295 aa).

The Core-binding (CB) domain maps to 1-85 (MDTIIEEYLK…TIRSFHQFAL (85 aa)). The Tyr recombinase domain maps to 106 to 289 (KLPDVLEINE…SKSQIRKMYN (184 aa)). Residues Arg146, Lys170, His241, Arg244, and His267 contribute to the active site. Tyr276 (O-(3'-phospho-DNA)-tyrosine intermediate) is an active-site residue.

This sequence belongs to the 'phage' integrase family. XerD subfamily. Forms a cyclic heterotetrameric complex composed of two molecules of XerC and two molecules of XerD.

The protein resides in the cytoplasm. Its function is as follows. Site-specific tyrosine recombinase, which acts by catalyzing the cutting and rejoining of the recombining DNA molecules. The XerC-XerD complex is essential to convert dimers of the bacterial chromosome into monomers to permit their segregation at cell division. It also contributes to the segregational stability of plasmids. This chain is Tyrosine recombinase XerD, found in Staphylococcus saprophyticus subsp. saprophyticus (strain ATCC 15305 / DSM 20229 / NCIMB 8711 / NCTC 7292 / S-41).